Reading from the N-terminus, the 116-residue chain is Large ribosomal subunit protein uL22 (116 aa).

Belongs to the universal ribosomal protein uL22 family. Part of the 50S ribosomal subunit.

In terms of biological role, this protein binds specifically to 23S rRNA; its binding is stimulated by other ribosomal proteins, e.g. L4, L17, and L20. It is important during the early stages of 50S assembly. It makes multiple contacts with different domains of the 23S rRNA in the assembled 50S subunit and ribosome. Functionally, the globular domain of the protein is located near the polypeptide exit tunnel on the outside of the subunit, while an extended beta-hairpin is found that lines the wall of the exit tunnel in the center of the 70S ribosome. In Orientia tsutsugamushi (strain Boryong) (Rickettsia tsutsugamushi), this protein is Large ribosomal subunit protein uL22.